The chain runs to 169 residues: Cilia- and flagella-associated protein HOATZ (169 aa).

Disordered stretches follow at residues 1 to 21 (METGPSEEPSGRKESQEMCPP), 52 to 89 (SQLVLRRDSSQRLPVARPRRSRGSENSHSSQSFHLASN), and 144 to 169 (KAKEHKAKKVVSESDKEDQEEVKTLD). Positions 75 to 89 (SENSHSSQSFHLASN) are enriched in polar residues.

The protein belongs to the HOATZ family.

The protein localises to the cytoplasm. It is found in the cell projection. It localises to the cilium. Its function is as follows. Required for motile ciliogenesis and flagellar genesis by mediating the maturation of the glycolytic enzyme ENO4. The polypeptide is Cilia- and flagella-associated protein HOATZ (Homo sapiens (Human)).